Reading from the N-terminus, the 118-residue chain is Diacylglycerol kinase (118 aa).

Glu28 contacts a divalent metal cation. Transmembrane regions (helical) follow at residues 29 to 49 and 55 to 75; these read TAFR…FFLG and IILM…NSAV. Glu69 acts as the Proton acceptor in catalysis. Glu76 is a binding site for a divalent metal cation. The chain crosses the membrane as a helical span at residues 98–118; the sequence is SASVFIALCIVGIVWGGILFF.

The protein belongs to the bacterial diacylglycerol kinase family. Requires Mg(2+) as cofactor.

It is found in the cell inner membrane. It carries out the reaction a 1,2-diacyl-sn-glycerol + ATP = a 1,2-diacyl-sn-glycero-3-phosphate + ADP + H(+). Its function is as follows. Catalyzes the ATP-dependent phosphorylation of sn-l,2-diacylglycerol (DAG) to phosphatidic acid. Involved in the recycling of diacylglycerol produced as a by-product during membrane-derived oligosaccharide (MDO) biosynthesis. This chain is Diacylglycerol kinase (dgkA), found in Haemophilus influenzae (strain ATCC 51907 / DSM 11121 / KW20 / Rd).